The chain runs to 257 residues: Pyridoxine 5'-phosphate synthase (257 aa).

3-amino-2-oxopropyl phosphate is bound at residue asparagine 6. 8–9 (DH) lines the 1-deoxy-D-xylulose 5-phosphate pocket. Arginine 17 is a binding site for 3-amino-2-oxopropyl phosphate. Histidine 41 serves as the catalytic Proton acceptor. 1-deoxy-D-xylulose 5-phosphate is bound by residues arginine 43 and histidine 48. Catalysis depends on glutamate 68, which acts as the Proton acceptor. Residue threonine 98 participates in 1-deoxy-D-xylulose 5-phosphate binding. Histidine 210 functions as the Proton donor in the catalytic mechanism. 3-amino-2-oxopropyl phosphate contacts are provided by residues glycine 211 and 232–233 (GQ).

It belongs to the PNP synthase family. Homooctamer; tetramer of dimers.

The protein resides in the cytoplasm. The enzyme catalyses 3-amino-2-oxopropyl phosphate + 1-deoxy-D-xylulose 5-phosphate = pyridoxine 5'-phosphate + phosphate + 2 H2O + H(+). It participates in cofactor biosynthesis; pyridoxine 5'-phosphate biosynthesis; pyridoxine 5'-phosphate from D-erythrose 4-phosphate: step 5/5. Its function is as follows. Catalyzes the complicated ring closure reaction between the two acyclic compounds 1-deoxy-D-xylulose-5-phosphate (DXP) and 3-amino-2-oxopropyl phosphate (1-amino-acetone-3-phosphate or AAP) to form pyridoxine 5'-phosphate (PNP) and inorganic phosphate. The polypeptide is Pyridoxine 5'-phosphate synthase (Campylobacter jejuni subsp. jejuni serotype O:2 (strain ATCC 700819 / NCTC 11168)).